The primary structure comprises 634 residues: MVRLVLPNPGLEDRIPSLDELEVIEKEEASSRPKWDNKAQYMLTCVGFCVGLGNVWRFPYLCQSHGGGAFMIPFLILLVLEGIPLLHLEFAIGQRLRKGSVGVWSSIHPALKGVGIASMFVSFMVGLYYNTIIAWVMWYFFNSFQEPLPWSECPLNQNQTGYVEECAKSSSVDYFWYRETLNISTSISDSGSIQWWILLCLTCAWSVLYVCTIRGIETTGKAVYITSTLPYVVLTIFLIRGLTLKGATNGIVFLFTPNITELSNPNTWLDAGAQVFYSFSLAFGGLISFSSYNSVHNNCEMDSVIVSIINGFTSVYAATVVYSIIGFRATERFDDCVNTNILTLINGFDLPEGNVTAENFEAYQHWCNATNPEAYAQLTFQTCDINTFLSEGVEGTGLAFIVFTEAITKMPVSPLWSVLFFIMLFCLGLSSMFGNMEGVVVPLQDLNITPKKWPKELLTGLICLGTYLIAFIFTLNSGQYWLSLLDSYAGSIPLLIIAFCEMFAVVYVYGVDRFNKDIEFMIGHKPNIFWQVTWRVVSPLIMLVIFLFFFVIEVNKQLMYSVWDPDYEEFPKSQKVPYPDWVYAVVVIVAGVPCLTIPCFAIYKLIRNYCQKSGDQHGLVNALSTASVNGDLKN.

Topologically, residues 1 to 41 (MVRLVLPNPGLEDRIPSLDELEVIEKEEASSRPKWDNKAQY) are cytoplasmic. Residue Ser-17 is modified to Phosphoserine. A helical membrane pass occupies residues 42 to 62 (MLTCVGFCVGLGNVWRFPYLC). The Extracellular segment spans residues 63-65 (QSH). The chain crosses the membrane as a helical span at residues 66–86 (GGGAFMIPFLILLVLEGIPLL). The Cytoplasmic segment spans residues 87-119 (HLEFAIGQRLRKGSVGVWSSIHPALKGVGIASM). Residues 120–140 (FVSFMVGLYYNTIIAWVMWYF) form a helical membrane-spanning segment. Over 141–192 (FNSFQEPLPWSECPLNQNQTGYVEECAKSSSVDYFWYRETLNISTSISDSGS) the chain is Extracellular. Residues Asn-158 and Asn-182 are each glycosylated (N-linked (GlcNAc...) asparagine). Residues 193-213 (IQWWILLCLTCAWSVLYVCTI) form a helical membrane-spanning segment. At 214–221 (RGIETTGK) the chain is on the cytoplasmic side. Residues 222 to 242 (AVYITSTLPYVVLTIFLIRGL) form a helical membrane-spanning segment. At 243-268 (TLKGATNGIVFLFTPNITELSNPNTW) the chain is on the extracellular side. The N-linked (GlcNAc...) asparagine glycan is linked to Asn-258. Residues 269–289 (LDAGAQVFYSFSLAFGGLISF) form a helical membrane-spanning segment. At 290–304 (SSYNSVHNNCEMDSV) the chain is on the cytoplasmic side. A helical membrane pass occupies residues 305–325 (IVSIINGFTSVYAATVVYSII). The Extracellular portion of the chain corresponds to 326 to 413 (GFRATERFDD…TEAITKMPVS (88 aa)). 2 N-linked (GlcNAc...) asparagine glycosylation sites follow: Asn-354 and Asn-368. The helical transmembrane segment at 414-434 (PLWSVLFFIMLFCLGLSSMFG) threads the bilayer. At 435–456 (NMEGVVVPLQDLNITPKKWPKE) the chain is on the cytoplasmic side. Residues 457-477 (LLTGLICLGTYLIAFIFTLNS) traverse the membrane as a helical segment. Residues 478-490 (GQYWLSLLDSYAG) lie on the Extracellular side of the membrane. Residues 491 to 511 (SIPLLIIAFCEMFAVVYVYGV) form a helical membrane-spanning segment. Residues 512–531 (DRFNKDIEFMIGHKPNIFWQ) lie on the Cytoplasmic side of the membrane. A helical transmembrane segment spans residues 532–552 (VTWRVVSPLIMLVIFLFFFVI). Over 553–581 (EVNKQLMYSVWDPDYEEFPKSQKVPYPDW) the chain is Extracellular. Residues 582-602 (VYAVVVIVAGVPCLTIPCFAI) traverse the membrane as a helical segment. Topologically, residues 603–634 (YKLIRNYCQKSGDQHGLVNALSTASVNGDLKN) are cytoplasmic. At Ser-627 the chain carries Phosphoserine.

This sequence belongs to the sodium:neurotransmitter symporter (SNF) (TC 2.A.22) family. SLC6A19 subfamily. In terms of assembly, interacts in a tissue-specific manner with ACE2 in small intestine and with CLTRN in the kidney. Interacts with CLTRN; this interaction is required for trafficking of SLC6A19 to the plasma membrane and for its catalytic activation in kidneys. Interacts with ACE2; this interaction is required for trafficking of SLC6A19 to the plasma membrane and for its catalytic activation in intestine. Interacts with ANPEP; the interaction positively regulates its amino acid transporter activity.

The protein localises to the membrane. It catalyses the reaction L-alanine(in) + Na(+)(in) = L-alanine(out) + Na(+)(out). The catalysed reaction is L-cysteine(in) + Na(+)(in) = L-cysteine(out) + Na(+)(out). The enzyme catalyses L-glutamine(in) + Na(+)(in) = L-glutamine(out) + Na(+)(out). It carries out the reaction glycine(in) + Na(+)(in) = glycine(out) + Na(+)(out). It catalyses the reaction L-isoleucine(in) + Na(+)(in) = L-isoleucine(out) + Na(+)(out). The catalysed reaction is L-leucine(in) + Na(+)(in) = L-leucine(out) + Na(+)(out). The enzyme catalyses L-methionine(in) + Na(+)(in) = L-methionine(out) + Na(+)(out). It carries out the reaction L-phenylalanine(in) + Na(+)(in) = L-phenylalanine(out) + Na(+)(out). It catalyses the reaction L-serine(in) + Na(+)(in) = L-serine(out) + Na(+)(out). The catalysed reaction is L-tryptophan(in) + Na(+)(in) = L-tryptophan(out) + Na(+)(out). The enzyme catalyses L-tyrosine(in) + Na(+)(in) = L-tyrosine(out) + Na(+)(out). It carries out the reaction L-valine(in) + Na(+)(in) = L-valine(out) + Na(+)(out). Its function is as follows. Transporter that mediates resorption of neutral amino acids across the apical membrane of renal and intestinal epithelial cells. This uptake is sodium-dependent and chloride-independent. Requires CLTRN in kidney or ACE2 in intestine for cell surface expression and amino acid transporter activity. The polypeptide is Sodium-dependent neutral amino acid transporter B(0)AT1 (Rattus norvegicus (Rat)).